Here is a 218-residue protein sequence, read N- to C-terminus: Probable nicotinate-nucleotide adenylyltransferase (218 aa).

It belongs to the NadD family.

The catalysed reaction is nicotinate beta-D-ribonucleotide + ATP + H(+) = deamido-NAD(+) + diphosphate. It participates in cofactor biosynthesis; NAD(+) biosynthesis; deamido-NAD(+) from nicotinate D-ribonucleotide: step 1/1. In terms of biological role, catalyzes the reversible adenylation of nicotinate mononucleotide (NaMN) to nicotinic acid adenine dinucleotide (NaAD). This chain is Probable nicotinate-nucleotide adenylyltransferase, found in Burkholderia cenocepacia (strain ATCC BAA-245 / DSM 16553 / LMG 16656 / NCTC 13227 / J2315 / CF5610) (Burkholderia cepacia (strain J2315)).